Reading from the N-terminus, the 535-residue chain is Solute carrier family 22 member 7 (535 aa).

Transmembrane regions (helical) follow at residues 21–41, 144–164, 178–198, 202–222, 232–252, 257–277, 344–364, 375–395, 402–422, 429–449, 464–484, and 489–509; these read LVLM…PVFM, ITST…GYLS, VSSL…MFVV, LTGS…LEWL, VIST…GYLI, WLLL…WWVP, ISLC…GLTL, QTQL…YFLV, LTEA…LLVS, ITAL…TAYL, LGLT…AALL, and LLLP…TALL.

This sequence belongs to the major facilitator (TC 2.A.1) superfamily. Organic cation transporter (TC 2.A.1.19) family. As to expression, expressed in liver and kidney. Expressed at low levels in adipose tissue. Expressed in fetal liver. In kidney, expressed at the brush border of the proximal tubule S3 segment (S3) in the outer stripe and medullary rays. In kidney, expression is higher in female than male.

It localises to the basolateral cell membrane. The protein localises to the apical cell membrane. The protein resides in the cell membrane. The catalysed reaction is orotate(out) + L-glutamate(in) = orotate(in) + L-glutamate(out). The enzyme catalyses 3',5'-cyclic GMP(in) = 3',5'-cyclic GMP(out). It carries out the reaction GMP(in) = GMP(out). It catalyses the reaction 2'-deoxyguanosine(in) = 2'-deoxyguanosine(out). The catalysed reaction is GDP(in) = GDP(out). The enzyme catalyses guanosine(in) = guanosine(out). It carries out the reaction GTP(in) = GTP(out). It catalyses the reaction 3',5'-cyclic AMP(in) = 3',5'-cyclic AMP(out). The catalysed reaction is creatinine(in) = creatinine(out). The enzyme catalyses prostaglandin E2(out) = prostaglandin E2(in). It carries out the reaction 2-oxoglutarate(in) = 2-oxoglutarate(out). It catalyses the reaction glutarate(in) = glutarate(out). The catalysed reaction is urate(out) = urate(in). The enzyme catalyses estrone 3-sulfate(out) = estrone 3-sulfate(in). Functionally, functions as a Na(+)-independent bidirectional multispecific transporter. Contributes to the renal and hepatic elimination of endogenous organic compounds from the systemic circulation into the urine and bile, respectively. Capable of transporting a wide range of purine and pyrimidine nucleobases, nucleosides, and nucleotides with cGMP, 2'deoxyguanosine and GMP being the preferred substrates. Functions as a pH- and chloride-independent cGMP bidirectional facilitative transporter that can regulate both intracellular and extracellular levels of cGMP and may be involved in cGMP signaling pathways. Mediates orotate/glutamate bidirectional exchange and most likely display a physiological role in hepatic release of glutamate into the blood. Involved in renal secretion and possible reabsorption of creatinine. Able to uptake prostaglandin E2 (PGE2) and may contribute to PGE2 renal excretion. Also transports alpha-ketoglutarate and urate. Apart from the orotate/glutamate exchange, the counterions for the uptake of other SLC22A7/OAT2 substrates remain to be identified. This chain is Solute carrier family 22 member 7, found in Rattus norvegicus (Rat).